The sequence spans 307 residues: Ribosomal RNA small subunit methyltransferase H (307 aa).

Residues 33–35, Asp51, Phe82, Asp96, and Gln103 contribute to the S-adenosyl-L-methionine site; that span reads GGY.

The protein belongs to the methyltransferase superfamily. RsmH family.

The protein localises to the cytoplasm. The catalysed reaction is cytidine(1402) in 16S rRNA + S-adenosyl-L-methionine = N(4)-methylcytidine(1402) in 16S rRNA + S-adenosyl-L-homocysteine + H(+). Its function is as follows. Specifically methylates the N4 position of cytidine in position 1402 (C1402) of 16S rRNA. In Rickettsia rickettsii (strain Iowa), this protein is Ribosomal RNA small subunit methyltransferase H.